Consider the following 792-residue polypeptide: RAD50-interacting protein 1 (792 aa).

The segment at 1–22 (MLPAGEIGASPAAPCCSESGDE) is disordered. Positions 103-124 (IRSALKNAEESKQFLNQFLEQE) form a coiled coil. Residues 220 to 792 (WHKILKDKLT…LRTNWPNTGK (573 aa)) form the RINT1/TIP20 domain.

Belongs to the RINT1 family. In terms of assembly, component of the NRZ complex composed of NBAS, ZW10 and RINT1/TIP20L; NRZ associates with SNAREs STX18, USE1L, BNIP1/SEC20L and SEC22B (the assembly has been described as syntaxin 18 complex). Interacts directly with BNIP1/SEC20L and ZW10. Interacts with UVRAG. Interacts with RAD50 during late S and G2/M phases. Interacts with RBL2, preferentially with the active, hypophosphorylated form.

It is found in the cytoplasm. Its subcellular location is the endoplasmic reticulum membrane. Functionally, involved in regulation of membrane traffic between the Golgi and the endoplasmic reticulum (ER); the function is proposed to depend on its association in the NRZ complex which is believed to play a role in SNARE assembly at the ER. May play a role in cell cycle checkpoint control. Essential for telomere length control. The protein is RAD50-interacting protein 1 (RINT1) of Homo sapiens (Human).